A 150-amino-acid polypeptide reads, in one-letter code: 3-dehydroquinate dehydratase (150 aa).

The active-site Proton acceptor is the Y26. Residues N77, H83, and D90 each coordinate substrate. H103 (proton donor) is an active-site residue. Substrate is bound by residues 104-105 (LS) and R114.

The protein belongs to the type-II 3-dehydroquinase family. Homododecamer.

The enzyme catalyses 3-dehydroquinate = 3-dehydroshikimate + H2O. The protein operates within metabolic intermediate biosynthesis; chorismate biosynthesis; chorismate from D-erythrose 4-phosphate and phosphoenolpyruvate: step 3/7. Functionally, catalyzes a trans-dehydration via an enolate intermediate. The sequence is that of 3-dehydroquinate dehydratase from Pectobacterium carotovorum subsp. carotovorum (strain PC1).